The sequence spans 647 residues: Exoribonuclease 2 (647 aa).

One can recognise an RNB domain in the interval 192–519 (RIDLTSLDFV…NHRLLKAIIQ (328 aa)). The 83-residue stretch at 564–646 (EQRFTAEIID…ETRNIVARPT (83 aa)) folds into the S1 motif domain.

This sequence belongs to the RNR ribonuclease family. RNase II subfamily.

It localises to the cytoplasm. It catalyses the reaction Exonucleolytic cleavage in the 3'- to 5'-direction to yield nucleoside 5'-phosphates.. Functionally, involved in mRNA degradation. Hydrolyzes single-stranded polyribonucleotides processively in the 3' to 5' direction. In Photorhabdus laumondii subsp. laumondii (strain DSM 15139 / CIP 105565 / TT01) (Photorhabdus luminescens subsp. laumondii), this protein is Exoribonuclease 2.